The chain runs to 537 residues: DNA-directed primase/polymerase protein (537 aa).

Positions 1-22 form a coiled coil; sequence MLRKWEARVKQIEERASHYERK. Substrate contacts are provided by residues arginine 76, 114-116, 165-169, 270-273, and lysine 279; these read DLE, KFSRH, and RNFR. Mn(2+)-binding residues include aspartate 114 and glutamate 116. Zn(2+)-binding residues include cysteine 401, histidine 408, cysteine 428, and cysteine 433. The Zinc knuckle motif signature appears at 401–434; the sequence is CENIGRAHKSNNIMILVDLKNEVWYQKCHDPVCK. The segment at 462–481 is disordered; it reads SGETDDTSTSLTKDSQTPPS. The interaction with RPA1 stretch occupies residues 462-536; it reads SGETDDTSTS…DELIIEALQN (75 aa). Positions 468 to 478 are enriched in low complexity; sequence TSTSLTKDSQT. 2 consecutive short sequence motifs (RPA1-binding motif) follow at residues 494-507 and 524-532; these read WDDE…EATE and DIPDELIIE.

The protein belongs to the eukaryotic-type primase small subunit family. As to quaternary structure, interacts with RPA1; leading to recruitment to chromatin and stimulate DNA primase activity. Interacts with SSBP1. Interacts with POLDIP2; leading to enhance DNA polymerase activity. Mn(2+) is required as a cofactor.

The protein resides in the nucleus. Its subcellular location is the mitochondrion matrix. It is found in the chromosome. The enzyme catalyses ssDNA + n NTP = ssDNA/pppN(pN)n-1 hybrid + (n-1) diphosphate.. It carries out the reaction DNA(n) + a 2'-deoxyribonucleoside 5'-triphosphate = DNA(n+1) + diphosphate. DNA primase and DNA polymerase required to tolerate replication-stalling lesions by bypassing them. Required to facilitate mitochondrial and nuclear replication fork progression by initiating de novo DNA synthesis using dNTPs and acting as an error-prone DNA polymerase able to bypass certain DNA lesions. Shows a high capacity to tolerate DNA damage lesions such as 8oxoG and abasic sites in DNA. Provides different translesion synthesis alternatives when DNA replication is stalled: able to synthesize DNA primers downstream of lesions, such as ultraviolet (UV) lesions, R-loops and G-quadruplexes, to allow DNA replication to continue. Can also realign primers ahead of 'unreadable lesions' such as abasic sites and 6-4 photoproduct (6-4 pyrimidine-pyrimidinone), thereby skipping the lesion. Repriming avoids fork degradation while leading to accumulation of internal ssDNA gaps behind the forks. Also able to incorporate nucleotides opposite DNA lesions such as 8oxoG, like a regular translesion synthesis DNA polymerase. Also required for reinitiating stalled forks after UV damage during nuclear DNA replication. Required for mitochondrial DNA (mtDNA) synthesis and replication, by reinitiating synthesis after UV damage or in the presence of chain-terminating nucleotides. Prevents APOBEC family-mediated DNA mutagenesis by repriming downstream of abasic site to prohibit error-prone translesion synthesis. Has non-overlapping function with POLH. In addition to its role in DNA damage response, also required to maintain efficient nuclear and mitochondrial DNA replication in unperturbed cells. The polypeptide is DNA-directed primase/polymerase protein (Mus musculus (Mouse)).